The primary structure comprises 819 residues: Ion-translocating oxidoreductase complex subunit C (819 aa).

2 consecutive 4Fe-4S ferredoxin-type domains span residues 368–398 (EYAE…QQLY) and 408–437 (KSEE…IQYF). [4Fe-4S] cluster is bound by residues cysteine 378, cysteine 381, cysteine 384, cysteine 388, cysteine 417, cysteine 420, cysteine 423, and cysteine 427. 2 stretches are compositionally biased toward basic and acidic residues: residues 465-477 (QARM…ERKA) and 485-513 (ARRE…KANE). Disordered stretches follow at residues 465–568 (QARM…NAKK), 580–677 (AKKL…TALD), and 692–793 (AKKL…PKKA). Polar residues-rich tracts occupy residues 554 to 565 (VENQEQQTQPTN) and 587 to 601 (NSTS…TAEN). The segment covering 602–614 (QVEKTKSAVEKTQ) has biased composition (basic and acidic residues). Polar residues predominate over residues 641-656 (QTNSTSEAISNSQTAE). Residues 658-671 (EVEKTKSAVEKTEE) are compositionally biased toward basic and acidic residues. Polar residues-rich tracts occupy residues 699-712 (NSAS…QTAE) and 755-768 (NSTS…QTAE). A compositionally biased stretch (basic and acidic residues) spans 770–782 (EVEKTKSAVEKTQ).

The protein belongs to the 4Fe4S bacterial-type ferredoxin family. RnfC subfamily. In terms of assembly, the complex is composed of six subunits: RnfA, RnfB, RnfC, RnfD, RnfE and RnfG. It depends on [4Fe-4S] cluster as a cofactor.

The protein resides in the cell inner membrane. Part of a membrane-bound complex that couples electron transfer with translocation of ions across the membrane. The polypeptide is Ion-translocating oxidoreductase complex subunit C (Haemophilus influenzae (strain ATCC 51907 / DSM 11121 / KW20 / Rd)).